The chain runs to 605 residues: MTDLALIRNFSIIAHIDHGKSTLADRLIQYTGGLTEREMSEQVLDNMDIEKERGITIKAQTVRLDYTGKDGKTYQLNLMDTPGHVDFAYEVSRSLAACEGALLVVDAAQGVEAQTLANVYQSIEHDHEIVPVINKIDLPAAEPEKVKAEIEDVIGLDASNAVLTSAKSGIGIEEVLDAVVERIPPPKGDRSAPLKAMLVDSWYDPYLGVVILVRVIDGVIRKGLQVKFMAGGTEHLIDRVGCMRPKIETLDELGPGEIGFITAQIKEVAQARVGDTITTVKQGASEALPGFKEVQPVVFCGIFPVDAADFEKLRESIAKLRLNDASFSFEMESSAALGFGFRCGFLGLLHLEIIQERLSREYDLDLITTAPSVVYRIQLRASRNDDAREILLHNPADYPDPSRIETIEEPWIKGTIYTPDEYLGSVLKLCQDRRGIQTGLTYVGGRAQVTYELPLNEVVFDFYDRLKSISRGYASFDYEQVGLREGDLVKMSILVNNEPVDALSMIVHRSAAEARGRHMCERLKDLIPRHLFKIPIQAAIGGKVVARETISAMRKDVTAKCYGGDITRKKKLLEKQKKGKARMREYGNVSIPQEAFIAALRMGEE.

The region spanning 5–187 (ALIRNFSIIA…AVVERIPPPK (183 aa)) is the tr-type G domain. GTP contacts are provided by residues 17–22 (DHGKST) and 134–137 (NKID).

This sequence belongs to the TRAFAC class translation factor GTPase superfamily. Classic translation factor GTPase family. LepA subfamily.

The protein resides in the cell inner membrane. It catalyses the reaction GTP + H2O = GDP + phosphate + H(+). Required for accurate and efficient protein synthesis under certain stress conditions. May act as a fidelity factor of the translation reaction, by catalyzing a one-codon backward translocation of tRNAs on improperly translocated ribosomes. Back-translocation proceeds from a post-translocation (POST) complex to a pre-translocation (PRE) complex, thus giving elongation factor G a second chance to translocate the tRNAs correctly. Binds to ribosomes in a GTP-dependent manner. The protein is Elongation factor 4 of Novosphingobium aromaticivorans (strain ATCC 700278 / DSM 12444 / CCUG 56034 / CIP 105152 / NBRC 16084 / F199).